The primary structure comprises 644 residues: Chaperone protein DnaK (644 aa).

T199 carries the phosphothreonine; by autocatalysis modification. The tract at residues 602–644 (LYAEQSAQQQGSAGATGGEQPKADKAADDGVVDAEFEEVKDDK) is disordered. A compositionally biased stretch (low complexity) spans 604-614 (AEQSAQQQGSA). Residues 631–644 (GVVDAEFEEVKDDK) show a composition bias toward acidic residues.

It belongs to the heat shock protein 70 family.

Its function is as follows. Acts as a chaperone. The polypeptide is Chaperone protein DnaK (Teredinibacter turnerae (strain ATCC 39867 / T7901)).